Here is a 368-residue protein sequence, read N- to C-terminus: MPSDSCLLSLTVLQRLRAICPPLSTFYLFFVIFVVSTIFHCHRRLGLVPAPWASPSLVVFPPRHMPREGMFTIRVKGRLGNQMGEYATLFALARMNGRLAFIPASMHSTLAPIFRISLPVLHSDTAKRIPWQNYHLNDWMEERYRHIPGHYVRFTGYPCSWTFYHHLRPEILKEFTLHDHVREEAQAFLRGLQVNGSQPSTFVGVHVRRGDYVRVMPKVWKGVVADRGYLEKALDRFRARYSSPVFVVTSDDMAWCRKSITASRGDVAFAGNGLQGSPAKDIALLMQCNHTVITLGTFGIWAAYLTGGDTVYLANFTQPNSPFHTVFKPEAAYLPEWVGIAADLGQPNTVGSGHASARAPKRHWGALL.

Residues 1–20 (MPSDSCLLSLTVLQRLRAIC) are Cytoplasmic-facing. A helical; Signal-anchor for type II membrane protein membrane pass occupies residues 21-41 (PPLSTFYLFFVIFVVSTIFHC). The Lumenal segment spans residues 42 to 368 (HRRLGLVPAP…APKRHWGALL (327 aa)). 3 N-linked (GlcNAc...) asparagine glycosylation sites follow: asparagine 195, asparagine 289, and asparagine 315.

The protein belongs to the glycosyltransferase 11 family.

The protein resides in the golgi apparatus. The protein localises to the golgi stack membrane. It carries out the reaction a ganglioside GM1 + GDP-beta-L-fucose = a ganglioside Fuc-GM1 + GDP + H(+). Its pathway is protein modification; protein glycosylation. Functionally, catalyzes the transfer of alpha 1,2-linked fucose to ganglioside GM1 and galacto-N-biose. The polypeptide is Galactoside 2-alpha-L-fucosyltransferase Sec1 (Mus musculus (Mouse)).